The following is a 292-amino-acid chain: NADH-cytochrome b5 reductase 1 (292 aa).

Residues alanine 12–glycine 32 traverse the membrane as a helical segment. An FAD-binding FR-type domain is found at threonine 43 to threonine 148. FAD is bound by residues threonine 128–glycine 143 and histidine 154–leucine 191.

The protein belongs to the flavoprotein pyridine nucleotide cytochrome reductase family. In terms of assembly, monomer. Component of the 2-(3-amino-3-carboxypropyl)histidine synthase complex composed of dph1, dph2, dph3 and a NADH-dependent reductase, predominantly cbr1. It depends on FAD as a cofactor.

It is found in the mitochondrion outer membrane. The catalysed reaction is 2 Fe(III)-[cytochrome b5] + NADH = 2 Fe(II)-[cytochrome b5] + NAD(+) + H(+). It carries out the reaction 2 Fe(3+)-[Dph3] + NADH = 2 Fe(2+)-[Dph3] + NAD(+) + H(+). Its pathway is protein modification; peptidyl-diphthamide biosynthesis. Its function is as follows. NADH-dependent reductase for dph3 and cytochrome b5. Required for the first step of diphthamide biosynthesis, a post-translational modification of histidine which occurs in elongation factor 2. Dph1 and dph2 transfer a 3-amino-3-carboxypropyl (ACP) group from S-adenosyl-L-methionine (SAM) to a histidine residue, the reaction is assisted by a reduction system comprising dph3 and a NADH-dependent reductase, predominantly cbr1. By reducing dph3, also involved in the formation of the tRNA wobble base modification mcm5s 2U (5-methoxycarbonylmethyl-2-thiouridine), mediated by the elongator complex. The cytochrome b5/NADH cytochrome b5 reductase electron transfer system supports the catalytic activity of several sterol biosynthetic enzymes. This chain is NADH-cytochrome b5 reductase 1 (cbr1), found in Aspergillus oryzae (strain ATCC 42149 / RIB 40) (Yellow koji mold).